We begin with the raw amino-acid sequence, 278 residues long: Ribosomal RNA small subunit methyltransferase A (278 aa).

S-adenosyl-L-methionine is bound by residues asparagine 18, leucine 20, glycine 45, glutamate 66, aspartate 89, and asparagine 110.

The protein belongs to the class I-like SAM-binding methyltransferase superfamily. rRNA adenine N(6)-methyltransferase family. RsmA subfamily.

Its subcellular location is the cytoplasm. It carries out the reaction adenosine(1518)/adenosine(1519) in 16S rRNA + 4 S-adenosyl-L-methionine = N(6)-dimethyladenosine(1518)/N(6)-dimethyladenosine(1519) in 16S rRNA + 4 S-adenosyl-L-homocysteine + 4 H(+). Functionally, specifically dimethylates two adjacent adenosines (A1518 and A1519) in the loop of a conserved hairpin near the 3'-end of 16S rRNA in the 30S particle. May play a critical role in biogenesis of 30S subunits. In Cupriavidus pinatubonensis (strain JMP 134 / LMG 1197) (Cupriavidus necator (strain JMP 134)), this protein is Ribosomal RNA small subunit methyltransferase A.